A 342-amino-acid chain; its full sequence is Protein RecA 1 (342 aa).

An ATP-binding site is contributed by 68-75; that stretch reads GNESSGKT.

The protein belongs to the RecA family.

The protein localises to the cytoplasm. Functionally, can catalyze the hydrolysis of ATP in the presence of single-stranded DNA, the ATP-dependent uptake of single-stranded DNA by duplex DNA, and the ATP-dependent hybridization of homologous single-stranded DNAs. It interacts with LexA causing its activation and leading to its autocatalytic cleavage. This is Protein RecA 1 from Myxococcus xanthus.